The following is a 285-amino-acid chain: Cold sensitive U2 snRNA suppressor 2 (285 aa).

Residues 45 to 130 (TSIYISGLPT…KQIRVERAQF (86 aa)) form the RRM 1 domain. Residues 135–149 (GDNMHGKENDLKEFN) show a composition bias toward basic and acidic residues. A disordered region spans residues 135–154 (GDNMHGKENDLKEFNGPEPP). Ser-163 is subject to Phosphoserine. Residues 183 to 265 (RTVIFANVFN…QKLLAFISGD (83 aa)) enclose the RRM 2 domain. Positions 265-285 (DENTSSTSDKNEDSEVEDDLI) are disordered. Acidic residues predominate over residues 276–285 (EDSEVEDDLI).

Belongs to the HTATSF1 family. Interacts with PRP11. Associates with the U2 snRNA.

Its function is as follows. U2 snRNP protein which helps to refold U2 into a structure favorable for its binding to SF3b and SF3a prior to spliceosome assembly. Mediates functional interactions between U2 RNA and PRP5. Enforces ATP dependence during formation of the prespliceosome by brokering an interaction between PRP5 and the U2 snRNP that depends on correct U2 RNA structure. The protein is Cold sensitive U2 snRNA suppressor 2 (CUS2) of Saccharomyces cerevisiae (strain ATCC 204508 / S288c) (Baker's yeast).